We begin with the raw amino-acid sequence, 466 residues long: 3-isopropylmalate dehydratase large subunit (466 aa).

Positions 347, 407, and 410 each coordinate [4Fe-4S] cluster.

It belongs to the aconitase/IPM isomerase family. LeuC type 1 subfamily. Heterodimer of LeuC and LeuD. The cofactor is [4Fe-4S] cluster.

It catalyses the reaction (2R,3S)-3-isopropylmalate = (2S)-2-isopropylmalate. The protein operates within amino-acid biosynthesis; L-leucine biosynthesis; L-leucine from 3-methyl-2-oxobutanoate: step 2/4. Catalyzes the isomerization between 2-isopropylmalate and 3-isopropylmalate, via the formation of 2-isopropylmaleate. The chain is 3-isopropylmalate dehydratase large subunit from Shigella dysenteriae serotype 1 (strain Sd197).